A 105-amino-acid chain; its full sequence is Pyrimidine/purine nucleoside phosphorylase (105 aa).

Belongs to the nucleoside phosphorylase PpnP family.

The enzyme catalyses a purine D-ribonucleoside + phosphate = a purine nucleobase + alpha-D-ribose 1-phosphate. It carries out the reaction adenosine + phosphate = alpha-D-ribose 1-phosphate + adenine. It catalyses the reaction cytidine + phosphate = cytosine + alpha-D-ribose 1-phosphate. The catalysed reaction is guanosine + phosphate = alpha-D-ribose 1-phosphate + guanine. The enzyme catalyses inosine + phosphate = alpha-D-ribose 1-phosphate + hypoxanthine. It carries out the reaction thymidine + phosphate = 2-deoxy-alpha-D-ribose 1-phosphate + thymine. It catalyses the reaction uridine + phosphate = alpha-D-ribose 1-phosphate + uracil. The catalysed reaction is xanthosine + phosphate = alpha-D-ribose 1-phosphate + xanthine. Its function is as follows. Catalyzes the phosphorolysis of diverse nucleosides, yielding D-ribose 1-phosphate and the respective free bases. Can use uridine, adenosine, guanosine, cytidine, thymidine, inosine and xanthosine as substrates. Also catalyzes the reverse reactions. In Cupriavidus pinatubonensis (strain JMP 134 / LMG 1197) (Cupriavidus necator (strain JMP 134)), this protein is Pyrimidine/purine nucleoside phosphorylase.